A 598-amino-acid chain; its full sequence is Elongation factor 4 (598 aa).

The tr-type G domain maps to 3 to 185 (QHIRNFSIIA…MIVAQIPPPE (183 aa)). GTP is bound by residues 15 to 20 (DHGKST) and 132 to 135 (NKID).

This sequence belongs to the TRAFAC class translation factor GTPase superfamily. Classic translation factor GTPase family. LepA subfamily.

Its subcellular location is the cell inner membrane. The enzyme catalyses GTP + H2O = GDP + phosphate + H(+). Functionally, required for accurate and efficient protein synthesis under certain stress conditions. May act as a fidelity factor of the translation reaction, by catalyzing a one-codon backward translocation of tRNAs on improperly translocated ribosomes. Back-translocation proceeds from a post-translocation (POST) complex to a pre-translocation (PRE) complex, thus giving elongation factor G a second chance to translocate the tRNAs correctly. Binds to ribosomes in a GTP-dependent manner. The protein is Elongation factor 4 of Nitrosomonas europaea (strain ATCC 19718 / CIP 103999 / KCTC 2705 / NBRC 14298).